A 153-amino-acid polypeptide reads, in one-letter code: Riboflavin synthase (153 aa).

The protein belongs to the DMRL synthase family.

It carries out the reaction 2 6,7-dimethyl-8-(1-D-ribityl)lumazine + H(+) = 5-amino-6-(D-ribitylamino)uracil + riboflavin. Its pathway is cofactor biosynthesis; riboflavin biosynthesis; riboflavin from 2-hydroxy-3-oxobutyl phosphate and 5-amino-6-(D-ribitylamino)uracil: step 2/2. The chain is Riboflavin synthase (ribC) from Archaeoglobus fulgidus (strain ATCC 49558 / DSM 4304 / JCM 9628 / NBRC 100126 / VC-16).